Consider the following 341-residue polypeptide: Anthranilate phosphoribosyltransferase (341 aa).

5-phospho-alpha-D-ribose 1-diphosphate is bound by residues glycine 79, 82-83, threonine 87, 89-92, 107-115, and serine 119; these read GD, NIST, and KHGNRSISS. Glycine 79 lines the anthranilate pocket. Residue serine 91 participates in Mg(2+) binding. Residue asparagine 110 participates in anthranilate binding. Arginine 164 serves as a coordination point for anthranilate. Mg(2+) contacts are provided by aspartate 222 and glutamate 223.

Belongs to the anthranilate phosphoribosyltransferase family. Homodimer. Requires Mg(2+) as cofactor.

The enzyme catalyses N-(5-phospho-beta-D-ribosyl)anthranilate + diphosphate = 5-phospho-alpha-D-ribose 1-diphosphate + anthranilate. It participates in amino-acid biosynthesis; L-tryptophan biosynthesis; L-tryptophan from chorismate: step 2/5. Catalyzes the transfer of the phosphoribosyl group of 5-phosphorylribose-1-pyrophosphate (PRPP) to anthranilate to yield N-(5'-phosphoribosyl)-anthranilate (PRA). In Blochmanniella pennsylvanica (strain BPEN), this protein is Anthranilate phosphoribosyltransferase.